The following is a 187-amino-acid chain: GMP synthase [glutamine-hydrolyzing] subunit A (187 aa).

The 187-residue stretch at 1-187 (MILIIDNHGQ…KNFAKLCGEL (187 aa)) folds into the Glutamine amidotransferase type-1 domain. The active-site Nucleophile is the C76. Catalysis depends on residues H164 and E166.

As to quaternary structure, heterodimer composed of a glutamine amidotransferase subunit (A) and a GMP-binding subunit (B).

The catalysed reaction is XMP + L-glutamine + ATP + H2O = GMP + L-glutamate + AMP + diphosphate + 2 H(+). The protein operates within purine metabolism; GMP biosynthesis; GMP from XMP (L-Gln route): step 1/1. Its function is as follows. Catalyzes the synthesis of GMP from XMP. This is GMP synthase [glutamine-hydrolyzing] subunit A from Methanopyrus kandleri (strain AV19 / DSM 6324 / JCM 9639 / NBRC 100938).